Reading from the N-terminus, the 157-residue chain is MEKVPMTVAGYQTLDEELKRLKTVERPAVIAAIAEARSHGDLSENAEYHAAKERQGWIEGQIAEIEDKIARAQVIDVTKLSGKQVKFGATVSVVDEDTEEEARYQIVGDHEADVKSGRISLSSPLSRAMIGKEVGEVVEVNTPGGVKAYEILKVEWL.

Belongs to the GreA/GreB family.

Functionally, necessary for efficient RNA polymerase transcription elongation past template-encoded arresting sites. The arresting sites in DNA have the property of trapping a certain fraction of elongating RNA polymerases that pass through, resulting in locked ternary complexes. Cleavage of the nascent transcript by cleavage factors such as GreA or GreB allows the resumption of elongation from the new 3'terminus. GreA releases sequences of 2 to 3 nucleotides. This Caulobacter vibrioides (strain ATCC 19089 / CIP 103742 / CB 15) (Caulobacter crescentus) protein is Transcription elongation factor GreA.